The primary structure comprises 283 residues: Shikimate dehydrogenase (NADP(+)) (283 aa).

Residues 19-21 and Thr66 contribute to the shikimate site; that span reads SRS. The active-site Proton acceptor is the Lys70. NADP(+) is bound at residue Glu82. Positions 91 and 107 each coordinate shikimate. NADP(+)-binding positions include 133-137 and Ile226; that span reads GAGGA. Tyr228 lines the shikimate pocket. NADP(+) is bound at residue Gly249.

This sequence belongs to the shikimate dehydrogenase family. As to quaternary structure, homodimer.

The enzyme catalyses shikimate + NADP(+) = 3-dehydroshikimate + NADPH + H(+). Its pathway is metabolic intermediate biosynthesis; chorismate biosynthesis; chorismate from D-erythrose 4-phosphate and phosphoenolpyruvate: step 4/7. Functionally, involved in the biosynthesis of the chorismate, which leads to the biosynthesis of aromatic amino acids. Catalyzes the reversible NADPH linked reduction of 3-dehydroshikimate (DHSA) to yield shikimate (SA). This Rhodospirillum rubrum (strain ATCC 11170 / ATH 1.1.1 / DSM 467 / LMG 4362 / NCIMB 8255 / S1) protein is Shikimate dehydrogenase (NADP(+)).